A 1404-amino-acid polypeptide reads, in one-letter code: G8 domain-containing protein DDB_G0286897 (1404 aa).

The signal sequence occupies residues 1–20 (MNYFKYFIFVVFLFFTIVKC). 2 helical membrane-spanning segments follow: residues 97 to 117 (LVGF…GLFA) and 128 to 148 (IIIL…IQSI). Asn-352, Asn-365, Asn-413, Asn-481, Asn-639, Asn-838, Asn-979, Asn-1003, Asn-1017, Asn-1253, and Asn-1334 each carry an N-linked (GlcNAc...) asparagine glycan. The region spanning 553-679 (STWASGFVPL…YHNTWTKLST (127 aa)) is the G8 domain.

Belongs to the comF family.

The protein resides in the membrane. This chain is G8 domain-containing protein DDB_G0286897, found in Dictyostelium discoideum (Social amoeba).